A 437-amino-acid polypeptide reads, in one-letter code: Protein translocase subunit SecY (437 aa).

The next 10 helical transmembrane spans lie at Leu-19–Val-39, Leu-69–Leu-89, Val-122–Phe-142, Ile-157–Leu-177, Gly-189–Ile-209, Trp-219–Val-239, Val-276–Ala-296, Pro-316–Ile-336, Gly-378–Ala-398, and Gln-400–Val-420.

Belongs to the SecY/SEC61-alpha family. As to quaternary structure, component of the Sec protein translocase complex. Heterotrimer consisting of SecY, SecE and SecG subunits. The heterotrimers can form oligomers, although 1 heterotrimer is thought to be able to translocate proteins. Interacts with the ribosome. Interacts with SecDF, and other proteins may be involved. Interacts with SecA.

It is found in the cell membrane. Its function is as follows. The central subunit of the protein translocation channel SecYEG. Consists of two halves formed by TMs 1-5 and 6-10. These two domains form a lateral gate at the front which open onto the bilayer between TMs 2 and 7, and are clamped together by SecE at the back. The channel is closed by both a pore ring composed of hydrophobic SecY resides and a short helix (helix 2A) on the extracellular side of the membrane which forms a plug. The plug probably moves laterally to allow the channel to open. The ring and the pore may move independently. This is Protein translocase subunit SecY from Streptomyces galbus.